The primary structure comprises 325 residues: Solute-binding protein Bpro_4736 (325 aa).

An N-terminal signal peptide occupies residues 1–27 (MKTRTLKVLKPTLALLLAASFSAGALA). Residue 168–173 (RISPVY) participates in phenylglyoxylate binding.

Belongs to the bacterial solute-binding protein 7 family. As to quaternary structure, the complex is comprised of an extracytoplasmic solute-binding protein and a heteromeric permease formed by two transmembrane proteins.

It is found in the periplasm. Solute-binding protein that binds phenylglyoxylate (in vitro). Probably part of a tripartite ATP-independent periplasmic (TRAP) transport system that mediates solute transport into the cytoplasm. The protein is Solute-binding protein Bpro_4736 of Polaromonas sp. (strain JS666 / ATCC BAA-500).